The sequence spans 186 residues: uncharacterized protein (186 aa).

This is an uncharacterized protein from Methanocaldococcus jannaschii (strain ATCC 43067 / DSM 2661 / JAL-1 / JCM 10045 / NBRC 100440) (Methanococcus jannaschii).